Here is a 96-residue protein sequence, read N- to C-terminus: U-reduvitoxin-Pr12a (96 aa).

The first 20 residues, 1 to 20 (MKTALLLFFALVFIAFETEA), serve as a signal peptide directing secretion. 3 cysteine pairs are disulfide-bonded: Cys-21/Cys-38, Cys-33/Cys-53, and Cys-36/Cys-47. Pacifastin domains are found at residues 21 to 55 (CRPG…ICPP) and 59 to 94 (KLEC…CIHK). Residues 54-56 (PPR) form a pro-Pro-Arg motif necessary for proteolytic processing region. 3 cysteine pairs are disulfide-bonded: Cys-62–Cys-77, Cys-72–Cys-91, and Cys-75–Cys-86.

Belongs to the protease inhibitor I19 family. As to expression, expressed by the venom gland.

The protein resides in the secreted. Its function is as follows. Inhibits trypsin activity and prophenoloxidase (PPO) activation, an enzyme essential for both clotting and insect innate immune responses. It does not inhibit activity of chymotrypsin and protease K, and has no effect on phenoloxidase (PO) activity. The chain is U-reduvitoxin-Pr12a from Platymeris rhadamanthus (Red spot assassin bug).